The sequence spans 383 residues: S-adenosylmethionine synthase (383 aa).

H15 provides a ligand contact to ATP. Position 17 (D17) interacts with Mg(2+). Residue E43 coordinates K(+). L-methionine-binding residues include E56 and Q99. The interval Q99–R109 is flexible loop. ATP-binding positions include D164–K166, R230–F231, D239, R245–K246, A262, and K266. D239 is a binding site for L-methionine. An L-methionine-binding site is contributed by K270.

This sequence belongs to the AdoMet synthase family. As to quaternary structure, homotetramer; dimer of dimers. The cofactor is Mg(2+). K(+) is required as a cofactor.

It is found in the cytoplasm. It catalyses the reaction L-methionine + ATP + H2O = S-adenosyl-L-methionine + phosphate + diphosphate. Its pathway is amino-acid biosynthesis; S-adenosyl-L-methionine biosynthesis; S-adenosyl-L-methionine from L-methionine: step 1/1. Its function is as follows. Catalyzes the formation of S-adenosylmethionine (AdoMet) from methionine and ATP. The overall synthetic reaction is composed of two sequential steps, AdoMet formation and the subsequent tripolyphosphate hydrolysis which occurs prior to release of AdoMet from the enzyme. This is S-adenosylmethionine synthase from Shewanella baltica (strain OS155 / ATCC BAA-1091).